The chain runs to 710 residues: MSVPSSLSQSAINANSHGGPALSFPLPLHAAHNQLLNAKLQATAVVPKDLRSAMGEGSVPEPGPANAKWLKEGQNQLRRAATAHRDQNRNVTLTLAEEASQEAETAPLGPKGLMHLYSELELSAHNAANRGLHGSALIINTQEQGPDEGEEKAAGEAEEDDEDEEEEEEEEDLSSPPGLPEPLENVEVPSGPQALTDGPREHSKSASLLFGMRNSAASDEDSSWATLSQGSPSYGSPEDTDSFWNPNAFETDSDLPAGWMRVQDTSGTYYWHIPTGTTQWEPPGRASPSQGSSPQEESQLTWTGFAHQEGFEEGEFWKDEPSEEAPMELGLKDPEEATLSFPAQSLSPEPVPQEEEKLSQRNANPGIKCFAVRSLGWVEMTEEELAPGRSSVAVNNCIRQLSYHKNNLHDPMAGGWGEGKDLLLQLEDETLKLVEPQNQTLLHAQPIVSIRVWGVGRDSGSNRDFAYVARDKLTQMLKCHVFRCEAPAKNIATSLHEICSKIMSERRNARCLVNGLSLDHSKLVDVPFQVEFPAPKNELVQKFQVYYLGNVPVAKPVGVDVINGALESVLSSSSREQWTPSHVSVAPATLTILHQQTEAVLGECRVRFLSFLAVGRDVHTFAFIMAAGPASFCCHMFWCEPNAASLSEAVQAACMLRYQKCLDARSQTSTSCLPAPPAESVARRVGWTVRRGVQSLWGSLKPKRLGSQTP.

S135 carries the post-translational modification Phosphoserine. 2 disordered regions span residues 143–256 (EQGP…SDLP) and 276–300 (GTTQ…ESQL). Positions 145-173 (GPDEGEEKAAGEAEEDDEDEEEEEEEEDL) are enriched in acidic residues. K204 carries the N6-acetyllysine modification. Residues 223–234 (SWATLSQGSPSY) are compositionally biased toward polar residues. Positions 253 to 285 (SDLPAGWMRVQDTSGTYYWHIPTGTTQWEPPGR) constitute a WW domain. Over residues 287–299 (SPSQGSSPQEESQ) the composition is skewed to low complexity. The PID 1 domain maps to 370 to 509 (FAVRSLGWVE…SKIMSERRNA (140 aa)). A Phosphoserine; by PKC modification is found at S459. Residue S517 is modified to Phosphoserine. One can recognise a PID 2 domain in the interval 542-699 (KFQVYYLGNV…RRGVQSLWGS (158 aa)). Phosphotyrosine; by ABL1 is present on Y547. A Phosphoserine; by SGK1 modification is found at S610. Residue K701 is modified to N6-acetyllysine.

In terms of assembly, component of a complex, at least composed of APBB1, RASD1/DEXRAS1 and APP. Interacts (via PID domain 2) with APP (with the intracellular domain of the amyloid-beta precursor protein). Interacts (via PID domain 2) with RASD1/DEXRAS1; impairs the transcription activation activity. Interacts (via PID domain 1) with KAT5/TIP60. Interacts (via the WW domain) with the proline-rich region of APBB1IP. Interacts with TSHZ1 and TSHZ2. Interacts (via the WW domain) with histone H2AX (when phosphorylated on 'Tyr-142') and the proline-rich region of ENAH. Interacts with MAPK8. Interacts (via PID domain 1) with TSHZ3 (via homeobox domain). Interacts with SET. Found in a trimeric complex with HDAC1 and TSHZ3; the interaction between HDAC1 and APBB1 is mediated by TSHZ3. Interacts (via WWW domain) with NEK6. Interacts (via WWW domain) with ABL1. Interacts with RNF157. Interacts with ARF6. Post-translationally, polyubiquitination by RNF157 leads to degradation by the proteasome. In terms of processing, phosphorylation at Ser-610 by SGK1 promotes its localization to the nucleus. Phosphorylated following nuclear translocation. Phosphorylation at Tyr-546 by ABL1 enhances transcriptional activation activity and reduces the affinity for RASD1/DEXRAS1. Acetylation at Lys-204 and Lys-701 by KAT5 promotes its transcription activator activity. Phosphorylated at Ser-459 by PKC upon insulin activation. Expressed in the brain, retinal lens and muscle cells (at protein level).

Its subcellular location is the cell membrane. The protein resides in the cytoplasm. It is found in the nucleus. It localises to the cell projection. The protein localises to the growth cone. Its subcellular location is the nucleus speckle. Transcription coregulator that can have both coactivator and corepressor functions. Adapter protein that forms a transcriptionally active complex with the gamma-secretase-derived amyloid precursor protein (APP) intracellular domain. Plays a central role in the response to DNA damage by translocating to the nucleus and inducing apoptosis. May act by specifically recognizing and binding histone H2AX phosphorylated on 'Tyr-142' (H2AXY142ph) at double-strand breaks (DSBs), recruiting other pro-apoptosis factors such as MAPK8/JNK1. Required for histone H4 acetylation at double-strand breaks (DSBs). Its ability to specifically bind modified histones and chromatin modifying enzymes such as KAT5/TIP60, probably explains its transcription activation activity. Functions in association with TSHZ3, SET and HDAC factors as a transcriptional repressor, that inhibits the expression of CASP4. Associates with chromatin in a region surrounding the CASP4 transcriptional start site(s). Involved in hippocampal neurite branching and neuromuscular junction formation, as a result plays a role in spatial memory functioning. Plays a role in the maintenance of lens transparency. May play a role in muscle cell strength. Acts as a molecular adapter that functions in neurite outgrowth by activating the RAC1-ARF6 axis upon insulin treatment. The protein is Amyloid beta precursor protein binding family B member 1 of Mus musculus (Mouse).